A 271-amino-acid polypeptide reads, in one-letter code: MLYFLPTPIGNLDDISKRCLDVLELCEIIICEDTRVTKSLITLLNAKFGLQISPKEFYSLHTHNEKDFFDKFDKVRLETKICIYASDAGMPCISDPGISLVKFAQQNSIKYEVLSGANALLLAAAASGIIEKEFTFLGFLPNLGKERAIAIQNALNSLYPVIIYESPKRILSLIKSISEFDPLREVFIIKEATKKFEAKFKNSATNLLTQLENSNLNGEWCVVIDRSANKALERITTKDIMELDLPLKQKAKLISKITGENAKKIYQNLIT.

Belongs to the methyltransferase superfamily. RsmI family.

It is found in the cytoplasm. The catalysed reaction is cytidine(1402) in 16S rRNA + S-adenosyl-L-methionine = 2'-O-methylcytidine(1402) in 16S rRNA + S-adenosyl-L-homocysteine + H(+). In terms of biological role, catalyzes the 2'-O-methylation of the ribose of cytidine 1402 (C1402) in 16S rRNA. This Campylobacter fetus subsp. fetus (strain 82-40) protein is Ribosomal RNA small subunit methyltransferase I.